Reading from the N-terminus, the 57-residue chain is uncharacterized protein (57 aa).

A disordered region spans residues 1-57; sequence MITPIGKNSNSNSNSNSNSNSNSNSNSNSNSNSNSNSNSNSNSNSNSNSNSNSNSNN. A compositionally biased stretch (low complexity) spans 8–57; that stretch reads NSNSNSNSNSNSNSNSNSNSNSNSNSNSNSNSNSNSNSNSNSNSNSNSNN.

This is an uncharacterized protein from Dictyostelium discoideum (Social amoeba).